The chain runs to 142 residues: Small ribosomal subunit protein bS6 (142 aa).

Over residues 110–133 (NKKPSHAKEKHEKTEHTHSHHAEE) the composition is skewed to basic and acidic residues. The interval 110–142 (NKKPSHAKEKHEKTEHTHSHHAEEAESVGSHSE) is disordered.

It belongs to the bacterial ribosomal protein bS6 family.

Binds together with bS18 to 16S ribosomal RNA. The sequence is that of Small ribosomal subunit protein bS6 from Helicobacter pylori (strain P12).